Reading from the N-terminus, the 595-residue chain is Phenylalanine--tRNA ligase beta subunit (595 aa).

The 3'-CCA residue in tRNA stretch occupies residues 86–90; the sequence is KLSKP. One can recognise a B5 domain in the interval 292–370; it reads FNDRIMDVSI…VGYGFNNLPK (79 aa). Positions 348, 354, 357, and 358 each coordinate Mg(2+).

The protein belongs to the phenylalanyl-tRNA synthetase beta subunit family. Type 2 subfamily. Tetramer of two alpha and two beta subunits. Mg(2+) is required as a cofactor.

The protein resides in the cytoplasm. The catalysed reaction is tRNA(Phe) + L-phenylalanine + ATP = L-phenylalanyl-tRNA(Phe) + AMP + diphosphate + H(+). This is Phenylalanine--tRNA ligase beta subunit (FRS1) from Saccharomyces cerevisiae (strain ATCC 204508 / S288c) (Baker's yeast).